The primary structure comprises 364 residues: MDPPLKDGVIMRQHRISIFKKRRRSMKDIKILGVDIAKDVFQLCGIDEWGKVIYTRRVKRAQYVSTVASLKVGCVVMEACGGANHWYRTFMGMGIPTQLISPQHVKPYVKSNKNDRNDAQAIAEAASRASMRFVQGKTVEQQDVQALLKIRDRLVKSRTALINEIRGLLQEYGLTMARGAKRFYEELPLILASEAVGLTPRMKRVLNCLYTELLNRDEAIGDYEEELKAVAKANEDCQRVQSIPGVGYLTALSVYASVGDIHQFHRSRQLSAFIGLVPRQHSSGNKEVLLGISKRGNVMLRTLLIHGARALLRHVKNKTDKKSLWLKALIERRGMNRACVALANKNAPIIWALLTRQETYRCGA.

The protein belongs to the transposase IS1111A/IS1328/IS1533 family.

Functionally, required for the transposition of the insertion element. The sequence is that of Transposase for insertion sequence element IS1111A from Coxiella burnetii (strain RSA 493 / Nine Mile phase I).